The following is a 498-amino-acid chain: Glycerol kinase (498 aa).

Residue threonine 12 participates in ADP binding. ATP is bound by residues threonine 12, threonine 13, and serine 14. Threonine 12 contacts sn-glycerol 3-phosphate. Arginine 16 is an ADP binding site. Sn-glycerol 3-phosphate is bound by residues arginine 82, glutamate 83, and tyrosine 134. Glycerol contacts are provided by arginine 82, glutamate 83, and tyrosine 134. The residue at position 230 (histidine 230) is a Phosphohistidine; by HPr. Aspartate 244 provides a ligand contact to sn-glycerol 3-phosphate. Glycerol contacts are provided by aspartate 244 and glutamine 245. ADP contacts are provided by threonine 266 and glycine 309. The ATP site is built by threonine 266, glycine 309, glutamine 313, and glycine 410. 2 residues coordinate ADP: glycine 410 and asparagine 414.

It belongs to the FGGY kinase family. As to quaternary structure, homotetramer and homodimer (in equilibrium). In terms of processing, the phosphoenolpyruvate-dependent sugar phosphotransferase system (PTS), including enzyme I, and histidine-containing protein (HPr) are required for the phosphorylation, which leads to the activation of the enzyme.

It catalyses the reaction glycerol + ATP = sn-glycerol 3-phosphate + ADP + H(+). It functions in the pathway polyol metabolism; glycerol degradation via glycerol kinase pathway; sn-glycerol 3-phosphate from glycerol: step 1/1. With respect to regulation, activated by phosphorylation and inhibited by fructose 1,6-bisphosphate (FBP). In terms of biological role, key enzyme in the regulation of glycerol uptake and metabolism. Catalyzes the phosphorylation of glycerol to yield sn-glycerol 3-phosphate. The sequence is that of Glycerol kinase from Staphylococcus aureus (strain MW2).